Consider the following 538-residue polypeptide: Lipid scramblase CLPTM1L (538 aa).

Over 1–10 (MWSGRSSFTS) the chain is Cytoplasmic. The chain crosses the membrane as a helical span at residues 11 to 31 (LVVGVFVVYVVHTCWVMYGIV). Topologically, residues 32–284 (YTRPCSGDAN…VKGIFVDTNL (253 aa)) are extracellular. N-linked (GlcNAc...) asparagine glycosylation is found at Asn-91, Asn-101, and Asn-229. A helical transmembrane segment spans residues 285 to 305 (YFLALTFFVAAFHLLFDFLAF). Over 306–324 (KNDISFWKKKKSMIGMSTK) the chain is Cytoplasmic. Residues 325-342 (AVLWRCFSTVVIFLFLLD) form a helical membrane-spanning segment. Residues 343-346 (EQTS) are Extracellular-facing. A helical membrane pass occupies residues 347 to 364 (LLVLVPAGVGAAIELWKV). Topologically, residues 365 to 402 (KKALKMTIFWRGLMPEFQFGTYSESERKTEEYDTQAMK) are cytoplasmic. Residues 403 to 423 (YLSYLLYPLCVGGAVYSLLNI) traverse the membrane as a helical segment. Topologically, residues 424-428 (KYKSW) are extracellular. A helical transmembrane segment spans residues 429–449 (YSWLINSFVNGVYAFGFLFML). Residues 450–538 (PQLFVNYKLK…EKATRAPHTD (89 aa)) are Cytoplasmic-facing.

It belongs to the CLPTM1 family. As to expression, ubiquitously expressed.

The protein resides in the endoplasmic reticulum membrane. It catalyses the reaction a 6-(alpha-D-glucosaminyl)-1-(1,2-diacyl-sn-glycero-3-phospho)-1D-myo-inositol(in) = a 6-(alpha-D-glucosaminyl)-1-(1,2-diacyl-sn-glycero-3-phospho)-1D-myo-inositol(out). The enzyme catalyses 6-(alpha-D-glucosaminyl)-(1-octadecanoyl,2-(9Z)-octadecenoyl-sn-glycero-3-phospho)-1D-myo-inositol(in) = 6-(alpha-D-glucosaminyl)-(1-octadecanoyl,2-(9Z)-octadecenoyl-sn-glycero-3-phospho)-1D-myo-inositol(out). It carries out the reaction a 1,2-diacyl-sn-glycero-3-phospho-(1D-myo-inositol)(in) = a 1,2-diacyl-sn-glycero-3-phospho-(1D-myo-inositol)(out). The catalysed reaction is a 1,2-diacyl-sn-glycero-3-phosphocholine(in) = a 1,2-diacyl-sn-glycero-3-phosphocholine(out). It catalyses the reaction a 1,2-diacyl-sn-glycero-3-phosphoethanolamine(in) = a 1,2-diacyl-sn-glycero-3-phosphoethanolamine(out). In terms of biological role, scramblase that mediates the translocation of glucosaminylphosphatidylinositol (alpha-D-GlcN-(1-6)-(1,2-diacyl-sn-glycero-3-phospho)-1D-myo-inositol, GlcN-PI) across the endoplasmic reticulum (ER) membrane, from the cytosolic leaflet to the luminal leaflet of the ER membrane, where it participates in the biosynthesis of glycosylphosphatidylinositol (GPI). GPI is a lipid glycoconjugate involved in post-translational modification of proteins. Can also translocate 1,2-diacyl-sn-glycero-3-phospho-(1D-myo-inositol) (phosphatidylinositol or PI), as well as several other phospholipids (1,2-diacyl-sn-glycero-3-phosphocholine, 1,2-diacyl-sn-glycero-3-phosphoethanolamine), and N-acetylglucosaminylphosphatidylinositol (GlcNAc-PI) in vitro. The chain is Lipid scramblase CLPTM1L (CLPTM1L) from Homo sapiens (Human).